Here is a 146-residue protein sequence, read N- to C-terminus: Ferric uptake regulation protein 2 (146 aa).

Residues Cys-96 and Cys-99 each coordinate Zn(2+).

Belongs to the Fur family.

It is found in the cytoplasm. In terms of biological role, acts as a global negative controlling element, employing Fe(2+) as a cofactor to bind the operator of the repressed genes. The sequence is that of Ferric uptake regulation protein 2 (fur2) from Mycolicibacterium fortuitum (Mycobacterium fortuitum).